Reading from the N-terminus, the 338-residue chain is POU domain, class 4, transcription factor 3 (338 aa).

Positions 56–65 (RAEALAAVDI) match the POU-IV box motif. A POU-specific domain is found at 179–256 (DVESDPRELE…VLQAWLEEAE (78 aa)). The segment at residues 274–333 (RKRKRTSIAAPEKRSLEAYFAIQPRPSSEKIAAIAEKLDLKKNVVRVWFCNQRQKQKRMK) is a DNA-binding region (homeobox).

Belongs to the POU transcription factor family. Class-4 subfamily. Interacts with ISL1. As to expression, brain.

Its subcellular location is the nucleus. It localises to the cytoplasm. Its function is as follows. Acts as a transcriptional activator. Acts by binding to sequences related to the consensus octamer motif 5'-ATGCAAAT-3' in the regulatory regions of its target genes. Involved in the auditory system development, required for terminal differentiation of hair cells in the inner ear. The polypeptide is POU domain, class 4, transcription factor 3 (Mus musculus (Mouse)).